We begin with the raw amino-acid sequence, 288 residues long: Transformer-2 protein homolog beta (288 aa).

2 disordered regions span residues 1 to 114 (MSDS…RANP) and 196 to 225 (TKRP…YDRG). N-acetylserine is present on S2. A phosphoserine mark is found at S2, S4, and S14. Residues 17 to 28 (ASRSGSAHGSGK) are compositionally biased toward low complexity. A Phosphoserine modification is found at S29. Phosphothreonine is present on T33. The segment covering 59-109 (RSRRSSRRHYTRSRSRSRSHRRSRSRSYSRDYRRRHSHSHSPMSTRRRHVG) has biased composition (basic residues). Phosphoserine occurs at positions 83, 85, 87, 95, 97, and 99. The residue at position 103 (T103) is a Phosphothreonine. An RRM domain is found at 118–196 (CCLGVFGLSL…RRIRVDFSIT (79 aa)). The linker stretch occupies residues 193–230 (FSITKRPHTPTPGIYMGRPTYGSSRRRDYYDRGYDRGY). K197 participates in a covalent cross-link: Glycyl lysine isopeptide (Lys-Gly) (interchain with G-Cter in SUMO2). T201 and T203 each carry phosphothreonine. Phosphoserine occurs at positions 215 and 237. Residue R241 is modified to Asymmetric dimethylarginine; alternate. Residue R241 is modified to Dimethylated arginine; alternate. R241 is modified (omega-N-methylarginine; alternate). The disordered stretch occupies residues 242–288 (GGGGGGGGWRAAQDRDQIYRRRSPSPYYSRGGYRSRSRSRSYSPRRY). Residues 274 to 288 (YRSRSRSRSYSPRRY) are compositionally biased toward basic residues.

The protein belongs to the splicing factor SR family. Found in a pre-mRNA exonic splicing enhancer (ESE) complex with TRA2B/SFRS10, SNRNP70, SNRPA1 and SRRM1. Binds to A3 enhancer proteins SFRS4, SFRS5, SFRS6 and SFRS9. Interacts with CPSF6, RBMY1A1, RBMX, RNPS1 and phosphorylated SFRS13A. Interacts with SAFB/SAFB1. Interacts with ILDR1 (via C-terminus) and ILDR2. In terms of processing, phosphorylated in the RS domains.

It is found in the nucleus. Functionally, sequence-specific RNA-binding protein which participates in the control of pre-mRNA splicing. Can either activate or suppress exon inclusion. Acts additively with RBMX to promote exon 7 inclusion of the survival motor neuron SMN2. Activates the splicing of MAPT/Tau exon 10. Alters pre-mRNA splicing patterns by antagonizing the effects of splicing regulators, like RBMX. Binds to the AG-rich SE2 domain in the SMN exon 7 RNA. Binds to pre-mRNA. The protein is Transformer-2 protein homolog beta (TRA2B) of Bos taurus (Bovine).